We begin with the raw amino-acid sequence, 30 residues long: Sperm protamine P5 (30 aa).

The disordered stretch occupies residues 1–30 (YRRRRRRGRRGRRRRGRRRRSRGRRRAHGG).

As to expression, testis.

It localises to the nucleus. The protein resides in the chromosome. In terms of biological role, protamines substitute for histones in the chromatin of sperm during the haploid phase of spermatogenesis. They compact sperm DNA into a highly condensed, stable and inactive complex. The chain is Sperm protamine P5 from Octopus vulgaris (Common octopus).